The sequence spans 87 residues: Small ribosomal subunit protein uS15c (87 aa).

The protein belongs to the universal ribosomal protein uS15 family. In terms of assembly, part of the 30S ribosomal subunit.

Its subcellular location is the plastid. It localises to the chloroplast. The polypeptide is Small ribosomal subunit protein uS15c (rps15) (Solanum lycopersicum (Tomato)).